The sequence spans 379 residues: Chaperone protein DnaJ (379 aa).

The J domain occupies 5–69 (DYYEVLGISK…NKRATIDQFG (65 aa)). A CR-type zinc finger spans residues 136–218 (GTTKEISIRK…CHGKGTENKT (83 aa)). Zn(2+) contacts are provided by cysteine 149, cysteine 152, cysteine 166, cysteine 169, cysteine 192, cysteine 195, cysteine 206, and cysteine 209. 4 CXXCXGXG motif repeats span residues 149 to 156 (CETCHGDG), 166 to 173 (CSYCNGAG), 192 to 199 (CPKCNGSG), and 206 to 213 (CPTCHGKG).

Belongs to the DnaJ family. In terms of assembly, homodimer. Requires Zn(2+) as cofactor.

The protein localises to the cytoplasm. In terms of biological role, participates actively in the response to hyperosmotic and heat shock by preventing the aggregation of stress-denatured proteins and by disaggregating proteins, also in an autonomous, DnaK-independent fashion. Unfolded proteins bind initially to DnaJ; upon interaction with the DnaJ-bound protein, DnaK hydrolyzes its bound ATP, resulting in the formation of a stable complex. GrpE releases ADP from DnaK; ATP binding to DnaK triggers the release of the substrate protein, thus completing the reaction cycle. Several rounds of ATP-dependent interactions between DnaJ, DnaK and GrpE are required for fully efficient folding. Also involved, together with DnaK and GrpE, in the DNA replication of plasmids through activation of initiation proteins. The protein is Chaperone protein DnaJ of Staphylococcus aureus.